The sequence spans 444 residues: GTPase Der (444 aa).

EngA-type G domains follow at residues 3–167 (PIVA…PEAE) and 180–353 (LRLA…AECQ). Residues 9-16 (GRPNVGKS), 56-60 (DTGGM), 119-122 (NKVD), 186-193 (GRPNAGKS), 233-237 (DTAGV), and 298-301 (NKTD) each bind GTP. A KH-like domain is found at 354–438 (IRIGTGELNR…PVKVVCRASH (85 aa)).

This sequence belongs to the TRAFAC class TrmE-Era-EngA-EngB-Septin-like GTPase superfamily. EngA (Der) GTPase family. Associates with the 50S ribosomal subunit.

Functionally, GTPase that plays an essential role in the late steps of ribosome biogenesis. The sequence is that of GTPase Der from Solidesulfovibrio magneticus (strain ATCC 700980 / DSM 13731 / RS-1) (Desulfovibrio magneticus).